A 179-amino-acid polypeptide reads, in one-letter code: Photosystem I assembly protein Ycf4 (179 aa).

2 helical membrane-spanning segments follow: residues leucine 21 to valine 41 and isoleucine 59 to isoleucine 79.

It belongs to the Ycf4 family.

The protein resides in the plastid. Its subcellular location is the chloroplast thylakoid membrane. Seems to be required for the assembly of the photosystem I complex. This Rhodomonas salina (Cryptomonas salina) protein is Photosystem I assembly protein Ycf4.